A 727-amino-acid polypeptide reads, in one-letter code: Glycerol-3-phosphate dehydrogenase, mitochondrial (727 aa).

A mitochondrion-targeting transit peptide spans 1 to 42; it reads MAFQKAVKGTILVGGGALATVLGLSHFAHYKRKQVNLAFVEA. Residue 71 to 99 participates in FAD binding; that stretch reads DVLVIGGGATGSGCALDAVTRGLKTALVE. Position 601 is a phosphotyrosine (Tyr-601). EF-hand domains follow at residues 623–658 and 659–694; these read SDID…IGVQ and MDEN…IQKG. Ca(2+) is bound by residues Asp-672, Asn-674, Asn-676, Gln-678, and Glu-683.

Belongs to the FAD-dependent glycerol-3-phosphate dehydrogenase family. FAD serves as cofactor.

The protein resides in the mitochondrion. It carries out the reaction a quinone + sn-glycerol 3-phosphate = dihydroxyacetone phosphate + a quinol. Its pathway is polyol metabolism; glycerol degradation via glycerol kinase pathway; glycerone phosphate from sn-glycerol 3-phosphate (aerobic route): step 1/1. Calcium-binding enhance the activity of the enzyme. Its function is as follows. Calcium-responsive mitochondrial glycerol-3-phosphate dehydrogenase which seems to be a key component of the pancreatic beta-cell glucose-sensing device. This is Glycerol-3-phosphate dehydrogenase, mitochondrial (GPD2) from Bos taurus (Bovine).